The following is a 437-amino-acid chain: ATP-dependent protease ATPase subunit HslU (437 aa).

Residues Val-18, Gly-60–Glu-65, Asp-250, Glu-315, and Arg-387 each bind ATP.

Belongs to the ClpX chaperone family. HslU subfamily. In terms of assembly, a double ring-shaped homohexamer of HslV is capped on each side by a ring-shaped HslU homohexamer. The assembly of the HslU/HslV complex is dependent on binding of ATP.

It localises to the cytoplasm. In terms of biological role, ATPase subunit of a proteasome-like degradation complex; this subunit has chaperone activity. The binding of ATP and its subsequent hydrolysis by HslU are essential for unfolding of protein substrates subsequently hydrolyzed by HslV. HslU recognizes the N-terminal part of its protein substrates and unfolds these before they are guided to HslV for hydrolysis. The polypeptide is ATP-dependent protease ATPase subunit HslU (Methylorubrum extorquens (strain PA1) (Methylobacterium extorquens)).